We begin with the raw amino-acid sequence, 296 residues long: Phosphatidylserine decarboxylase proenzyme (296 aa).

Catalysis depends on charge relay system; for autoendoproteolytic cleavage activity residues Asp-92, His-149, and Ser-251. Ser-251 functions as the Schiff-base intermediate with substrate; via pyruvic acid; for decarboxylase activity in the catalytic mechanism. Ser-251 carries the post-translational modification Pyruvic acid (Ser); by autocatalysis.

Belongs to the phosphatidylserine decarboxylase family. PSD-B subfamily. Prokaryotic type I sub-subfamily. Heterodimer of a large membrane-associated beta subunit and a small pyruvoyl-containing alpha subunit. It depends on pyruvate as a cofactor. Post-translationally, is synthesized initially as an inactive proenzyme. Formation of the active enzyme involves a self-maturation process in which the active site pyruvoyl group is generated from an internal serine residue via an autocatalytic post-translational modification. Two non-identical subunits are generated from the proenzyme in this reaction, and the pyruvate is formed at the N-terminus of the alpha chain, which is derived from the carboxyl end of the proenzyme. The autoendoproteolytic cleavage occurs by a canonical serine protease mechanism, in which the side chain hydroxyl group of the serine supplies its oxygen atom to form the C-terminus of the beta chain, while the remainder of the serine residue undergoes an oxidative deamination to produce ammonia and the pyruvoyl prosthetic group on the alpha chain. During this reaction, the Ser that is part of the protease active site of the proenzyme becomes the pyruvoyl prosthetic group, which constitutes an essential element of the active site of the mature decarboxylase.

The protein resides in the cell membrane. The enzyme catalyses a 1,2-diacyl-sn-glycero-3-phospho-L-serine + H(+) = a 1,2-diacyl-sn-glycero-3-phosphoethanolamine + CO2. It functions in the pathway phospholipid metabolism; phosphatidylethanolamine biosynthesis; phosphatidylethanolamine from CDP-diacylglycerol: step 2/2. Its function is as follows. Catalyzes the formation of phosphatidylethanolamine (PtdEtn) from phosphatidylserine (PtdSer). The polypeptide is Phosphatidylserine decarboxylase proenzyme (Hahella chejuensis (strain KCTC 2396)).